The following is a 391-amino-acid chain: Metallophosphoesterase 1 (391 aa).

A helical transmembrane segment spans residues 25–45 (TVVIISVLLFCEYFIYHLVIF). A divalent metal cation-binding residues include Asp72, Asp114, Asn152, His244, His298, and His300. Residues 352-372 (VLATYGAAAVFLVVLILAHLE) traverse the membrane as a helical segment.

The protein belongs to the metallophosphoesterase superfamily. MPPE1 family. As to quaternary structure, interacts with GPI-anchor proteins (via the GPI portion). Interacts with TMED10. Mn(2+) is required as a cofactor.

Its subcellular location is the endoplasmic reticulum-Golgi intermediate compartment membrane. Metallophosphoesterase that catalyzes the removal of a side-chain ethanolamine-phosphate (EtNP) from the second mannose of the GPI-anchor protein intermediate. Participates in the glycan remodeling steps of GPI-anchor maturation to allow an efficient transport of GPI-anchor proteins from the endoplasmic reticulum to the Golgi. This is Metallophosphoesterase 1 from Cricetulus griseus (Chinese hamster).